A 417-amino-acid chain; its full sequence is MAPLFLPLLIALALAPGPTASADVLEGDSSEDRAFRVRISGNAPLQGVLGGALTISCHVHYLRPPPGRRAVLGSPRVKWTFLSGGREAEVLVARGLRVKVSEAYRFRVALPAYPASLTDVSLALSELRPNDSGIYRCEVQHGIDDSSDAVEVKVKGVVFLYREGSARYAFSFARAQEACARIGARIATPEQLYAAYLGGYEQCDAGWLSDQTVRYPIQTPREACYGDMDGFPGVRNYGLVDPDDLYDIYCYAEDLNGELFLGAPPDNVTLEEATAYCRERGAEIATTGQLYAAWDGGLDRCSPGWLADGSVRYPIVTPSQRCGGGLPGVKTLFLFPNQTGFPNKYSRFNVYCFRDSGQPSTTPEASXPASDGLEAIVTVTETLEELHVPREAVESESRGAIYSVPIVEDGGGARSPP.

A signal peptide spans 1 to 22 (MAPLFLPLLIALALAPGPTASA). Positions 23 to 155 (DVLEGDSSED…SSDAVEVKVK (133 aa)) constitute an Ig-like V-type domain. Cystine bridges form between C57-C137, C179-C250, and C203-C224. Residue N130 is glycosylated (N-linked (GlcNAc...) asparagine). Link domains follow at residues 157–252 (VVFL…YCYA) and 257–354 (GELF…YCFR). N267 is a glycosylation site (N-linked (GlcNAc...) asparagine). 2 cysteine pairs are disulfide-bonded: C277-C352 and C301-C322. N-linked (GlcNAc...) asparagine glycosylation is present at N337.

It belongs to the aggrecan/versican proteoglycan family. As to expression, central nervous system.

It localises to the secreted. The protein localises to the extracellular space. Its subcellular location is the extracellular matrix. In terms of biological role, may play a role in the terminally differentiating and the adult nervous system during postnatal development. Could stabilize interactions between hyaluronan (HA) and brain proteoglycans. The polypeptide is Brevican core protein (BCAN) (Felis catus (Cat)).